Consider the following 138-residue polypeptide: Transcription antitermination protein NusB (138 aa).

It belongs to the NusB family.

Functionally, involved in transcription antitermination. Required for transcription of ribosomal RNA (rRNA) genes. Binds specifically to the boxA antiterminator sequence of the ribosomal RNA (rrn) operons. This chain is Transcription antitermination protein NusB, found in Coxiella burnetii (strain Dugway 5J108-111).